A 498-amino-acid chain; its full sequence is Lysine--tRNA ligase (498 aa).

Residues Glu-401 and Glu-408 each coordinate Mg(2+).

Belongs to the class-II aminoacyl-tRNA synthetase family. As to quaternary structure, homodimer. It depends on Mg(2+) as a cofactor.

It localises to the cytoplasm. It carries out the reaction tRNA(Lys) + L-lysine + ATP = L-lysyl-tRNA(Lys) + AMP + diphosphate. This chain is Lysine--tRNA ligase, found in Dehalococcoides mccartyi (strain ATCC BAA-2100 / JCM 16839 / KCTC 5957 / BAV1).